Reading from the N-terminus, the 177-residue chain is Large ribosomal subunit protein uL10 (177 aa).

The protein belongs to the universal ribosomal protein uL10 family. As to quaternary structure, part of the ribosomal stalk of the 50S ribosomal subunit. The N-terminus interacts with L11 and the large rRNA to form the base of the stalk. The C-terminus forms an elongated spine to which L12 dimers bind in a sequential fashion forming a multimeric L10(L12)X complex.

Forms part of the ribosomal stalk, playing a central role in the interaction of the ribosome with GTP-bound translation factors. The chain is Large ribosomal subunit protein uL10 from Leptospira biflexa serovar Patoc (strain Patoc 1 / Ames).